A 372-amino-acid chain; its full sequence is Lipid-A-disaccharide synthase (372 aa).

It belongs to the LpxB family.

The catalysed reaction is a lipid X + a UDP-2-N,3-O-bis[(3R)-3-hydroxyacyl]-alpha-D-glucosamine = a lipid A disaccharide + UDP + H(+). It functions in the pathway bacterial outer membrane biogenesis; LPS lipid A biosynthesis. In terms of biological role, condensation of UDP-2,3-diacylglucosamine and 2,3-diacylglucosamine-1-phosphate to form lipid A disaccharide, a precursor of lipid A, a phosphorylated glycolipid that anchors the lipopolysaccharide to the outer membrane of the cell. The protein is Lipid-A-disaccharide synthase of Thiobacillus denitrificans (strain ATCC 25259 / T1).